Here is a 1003-residue protein sequence, read N- to C-terminus: Helicase-like transcription factor (1003 aa).

At Arg27 the chain carries Omega-N-methylarginine. A DNA-binding region spans residues 38–287 (EFQDIIPPDD…FSVKERPENV (250 aa)). Residue Lys112 forms a Glycyl lysine isopeptide (Lys-Gly) (interchain with G-Cter in SUMO2) linkage. The residue at position 195 (Tyr195) is a Phosphotyrosine; by JAK2. A Glycyl lysine isopeptide (Lys-Gly) (interchain with G-Cter in SUMO2) cross-link involves residue Lys211. 294–301 (DDMGLGKT) is an ATP binding site. The disordered stretch occupies residues 317–373 (PLLSKRGKKNHPGKEYKDETIKRRGSNMDKKEDGHSESSTCGEEPSISGTPEKSSCT). The segment covering 328-352 (PGKEYKDETIKRRGSNMDKKEDGHS) has biased composition (basic and acidic residues). A compositionally biased stretch (polar residues) spans 353–373 (ESSTCGEEPSISGTPEKSSCT). Phosphoserine is present on residues Ser394, Ser395, and Ser397. Residues 433-600 (DSKFALTFFA…WSLLSFLKLK (168 aa)) enclose the Helicase ATP-binding domain. The short motif at 551–554 (DEGH) is the DEGH box element. Thr730 bears the Phosphothreonine mark. The RING-type zinc-finger motif lies at 754–795 (CAICLDSLTFPVITHCAHVFCKPCICQVIHSEQPHAKCPLCR). The 160-residue stretch at 831-990 (ALMHALIELR…TKKTDANDMK (160 aa)) folds into the Helicase C-terminal domain. The interval 919–1003 (SRVFLMDPAW…INEIRTLIDL (85 aa)) is interaction with SP1 and SP3.

The protein belongs to the SNF2/RAD54 helicase family. RAD16 subfamily. In terms of assembly, interacts with SP1 and SP3 independently of DNA; the interaction with these transcriptional factors may be required for basal transcription of target genes. Interacts with EGR1; the interaction requires prior binding to DNA and represses c-Rel via a DNA looping mechanism. Interacts with GATA4. Interacts with PCNA; the interaction promotes polyubiquitination of PCNA through association with the UBE2B-RAD18 and UBE2V2-UBE2N ubiquitin ligase complexes. Interacts with RAD18, SHPRH, UBE2V2 and UBE2N. In terms of tissue distribution, expressed in brain, heart, kidney, liver, lung, pancreas, placenta and skeletal muscle.

It is found in the cytoplasm. Its subcellular location is the nucleus. It localises to the nucleolus. The protein resides in the nucleoplasm. It catalyses the reaction S-ubiquitinyl-[E2 ubiquitin-conjugating enzyme]-L-cysteine + [acceptor protein]-L-lysine = [E2 ubiquitin-conjugating enzyme]-L-cysteine + N(6)-ubiquitinyl-[acceptor protein]-L-lysine.. The protein operates within protein modification; protein ubiquitination. In terms of biological role, has both helicase and E3 ubiquitin ligase activities. Possesses intrinsic ATP-dependent nucleosome-remodeling activity. This activity may be required for transcriptional activation or repression of specific target promoters. These may include the SERPINE1, to which this protein can bind directly. Plays a role in error-free postreplication repair (PRR) of damaged DNA and maintains genomic stability through acting as a ubiquitin ligase for 'Lys-63'-linked polyubiquitination of chromatin-bound PCNA. The polypeptide is Helicase-like transcription factor (Hltf) (Mus musculus (Mouse)).